The chain runs to 467 residues: Light-independent protochlorophyllide reductase subunit N (467 aa).

Positions 22, 47, and 107 each coordinate [4Fe-4S] cluster.

Belongs to the BchN/ChlN family. Protochlorophyllide reductase is composed of three subunits; ChlL, ChlN and ChlB. Forms a heterotetramer of two ChlB and two ChlN subunits. It depends on [4Fe-4S] cluster as a cofactor.

The protein localises to the plastid. It is found in the chloroplast. The enzyme catalyses chlorophyllide a + oxidized 2[4Fe-4S]-[ferredoxin] + 2 ADP + 2 phosphate = protochlorophyllide a + reduced 2[4Fe-4S]-[ferredoxin] + 2 ATP + 2 H2O. It participates in porphyrin-containing compound metabolism; chlorophyll biosynthesis (light-independent). Component of the dark-operative protochlorophyllide reductase (DPOR) that uses Mg-ATP and reduced ferredoxin to reduce ring D of protochlorophyllide (Pchlide) to form chlorophyllide a (Chlide). This reaction is light-independent. The NB-protein (ChlN-ChlB) is the catalytic component of the complex. The polypeptide is Light-independent protochlorophyllide reductase subunit N (Chara vulgaris (Common stonewort)).